The sequence spans 212 residues: Large ribosomal subunit protein uL3 (212 aa).

Q153 is subject to N5-methylglutamine.

Belongs to the universal ribosomal protein uL3 family. As to quaternary structure, part of the 50S ribosomal subunit. Forms a cluster with proteins L14 and L19. In terms of processing, methylated by PrmB.

Its function is as follows. One of the primary rRNA binding proteins, it binds directly near the 3'-end of the 23S rRNA, where it nucleates assembly of the 50S subunit. The chain is Large ribosomal subunit protein uL3 from Colwellia psychrerythraea (strain 34H / ATCC BAA-681) (Vibrio psychroerythus).